A 307-amino-acid chain; its full sequence is Beta-lactamase (307 aa).

The first 26 residues, 1–26 (MKLWFSTLKLKKAAAVLLFSCVALAG), serve as a signal peptide directing secretion. The N-palmitoyl cysteine moiety is linked to residue Cys27. Cys27 is lipidated: S-diacylglycerol cysteine. Ser86 (acyl-ester intermediate) is an active-site residue. Catalysis depends on Glu182, which acts as the Proton acceptor. 248-250 (KTG) lines the substrate pocket.

Belongs to the class-A beta-lactamase family. Large exopenicillinase is the primary secretion product; it can be converted to small exopenicillinase.

It is found in the cell membrane. The catalysed reaction is a beta-lactam + H2O = a substituted beta-amino acid. The chain is Beta-lactamase (penP) from Bacillus licheniformis.